The sequence spans 382 residues: Manganese peroxidase H4 (382 aa).

Positions 1-24 (MAFGSLLAFVALAAITRAAPTAES) are cleaved as a signal peptide. Disulfide bonds link Cys27–Cys39, Cys38–Cys313, Cys57–Cys141, Cys277–Cys344, and Cys366–Cys373. Positions 59 and 63 each coordinate Mn(2+). His70 (proton acceptor) is an active-site residue. Residues Asp71, Gly86, Asp88, and Ser90 each coordinate Ca(2+). Residues Asn100 and Asn155 are each glycosylated (N-linked (GlcNAc...) asparagine). Heme b is bound at residue His197. Thr198 contacts Ca(2+). Asp203 contributes to the Mn(2+) binding site. Residues Asp215, Thr217, Thr220, and Asp222 each contribute to the Ca(2+) site. Residue Asn241 is glycosylated (N-linked (GlcNAc...) asparagine).

It belongs to the peroxidase family. Ligninase subfamily. Heme b is required as a cofactor. Requires Ca(2+) as cofactor.

The protein resides in the secreted. The enzyme catalyses 2 Mn(2+) + H2O2 + 2 H(+) = 2 Mn(3+) + 2 H2O. Catalyzes the oxidation of Mn(2+) to Mn(3+). The latter, acting as a diffusible redox mediator, is capable of oxidizing a variety of lignin compounds. The polypeptide is Manganese peroxidase H4 (Phanerodontia chrysosporium (White-rot fungus)).